A 102-amino-acid chain; its full sequence is Large ribosomal subunit protein uL24 (102 aa).

The protein belongs to the universal ribosomal protein uL24 family. Part of the 50S ribosomal subunit.

Its function is as follows. One of two assembly initiator proteins, it binds directly to the 5'-end of the 23S rRNA, where it nucleates assembly of the 50S subunit. One of the proteins that surrounds the polypeptide exit tunnel on the outside of the subunit. The protein is Large ribosomal subunit protein uL24 of Paraburkholderia xenovorans (strain LB400).